Reading from the N-terminus, the 144-residue chain is PE family protein PE9 (144 aa).

A PE domain is found at 1-87; it reads MSYMIATPAA…RTLTGGCGVF (87 aa). Residues 98-124 form a disordered region; that stretch reads AAEHRAAGAGRRQRRRRSGDGQWRLRQ.

It belongs to the mycobacterial PE family. As to quaternary structure, forms a complex with PE10. The complex interacts with human TLR4.

The protein localises to the secreted. Its subcellular location is the cell wall. It localises to the cell surface. Functionally, together with PE10, induces macrophage apoptosis through human Toll-like receptor 4 (TLR4) signaling pathway. Interaction with TLR4 leads to increased levels of phospho-IRF-3, increase in the transcript levels of IFN-beta and pro-apoptotic genes, up-regulation of IL-10, down-regulation of IL-1b and enhanced levels of macrophage apoptosis. This is PE family protein PE9 from Mycobacterium tuberculosis (strain ATCC 25618 / H37Rv).